A 440-amino-acid polypeptide reads, in one-letter code: Chromosome partition protein MukF (440 aa).

Positions L208–I236 are leucine-zipper.

It belongs to the MukF family. As to quaternary structure, interacts, and probably forms a ternary complex, with MukE and MukB via its C-terminal region. The complex formation is stimulated by calcium or magnesium. It is required for an interaction between MukE and MukB.

Its subcellular location is the cytoplasm. The protein resides in the nucleoid. Its function is as follows. Involved in chromosome condensation, segregation and cell cycle progression. May participate in facilitating chromosome segregation by condensation DNA from both sides of a centrally located replisome during cell division. Not required for mini-F plasmid partitioning. Probably acts via its interaction with MukB and MukE. Overexpression results in anucleate cells. It has a calcium binding activity. The protein is Chromosome partition protein MukF of Histophilus somni (strain 129Pt) (Haemophilus somnus).